The following is a 315-amino-acid chain: Glutathione synthetase (315 aa).

The ATP-grasp domain occupies 125-310 (KLYTAWFADL…ITGMLMDAIE (186 aa)). 151-207 (WEKHGDIIMKPLDGMGGASIFRVKEGDPNIGVIAETLTELGNRYCMAQNYLPAIKDG) is a binding site for ATP. 2 residues coordinate Mg(2+): Glu281 and Asn283.

This sequence belongs to the prokaryotic GSH synthase family. Mg(2+) serves as cofactor. Requires Mn(2+) as cofactor.

It catalyses the reaction gamma-L-glutamyl-L-cysteine + glycine + ATP = glutathione + ADP + phosphate + H(+). It participates in sulfur metabolism; glutathione biosynthesis; glutathione from L-cysteine and L-glutamate: step 2/2. The protein is Glutathione synthetase of Salmonella typhi.